We begin with the raw amino-acid sequence, 517 residues long: Cytochrome P450 11B, mitochondrial (517 aa).

Residues Met1 to Asp45 constitute a mitochondrion transit peptide. Cys465 provides a ligand contact to heme.

The protein belongs to the cytochrome P450 family. Heme serves as cofactor.

The protein resides in the mitochondrion membrane. It catalyses the reaction a steroid + 2 reduced [adrenodoxin] + O2 + 2 H(+) = an 11beta-hydroxysteroid + 2 oxidized [adrenodoxin] + H2O. In terms of biological role, has 11 beta-hydroxylation, 18-hydroxylation activities and aldosterone synthetic activity. Catalyzes the final steps of glucocorticoid and mineralocorticoid biosynthesis. The protein is Cytochrome P450 11B, mitochondrial (CYP11B) of Aquarana catesbeiana (American bullfrog).